The chain runs to 101 residues: Ubiquitin-related modifier 1 (101 aa).

Residue Gly101 is modified to 1-thioglycine. Residue Gly101 forms a Glycyl lysine isopeptide (Gly-Lys) (interchain with K-? in acceptor proteins) linkage.

It belongs to the URM1 family. Post-translationally, C-terminal thiocarboxylation occurs in 2 steps, it is first acyl-adenylated (-COAMP) via the hesA/moeB/thiF part of UBA4, then thiocarboxylated (-COSH) via the rhodanese domain of UBA4.

It localises to the cytoplasm. Its pathway is tRNA modification; 5-methoxycarbonylmethyl-2-thiouridine-tRNA biosynthesis. Functionally, acts as a sulfur carrier required for 2-thiolation of mcm(5)S(2)U at tRNA wobble positions of cytosolic tRNA(Lys), tRNA(Glu) and tRNA(Gln). Serves as sulfur donor in tRNA 2-thiolation reaction by being thiocarboxylated (-COSH) at its C-terminus by the MOCS3 homolog UBA4. The sulfur is then transferred to tRNA to form 2-thiolation of mcm(5)S(2)U. Prior mcm(5) tRNA modification by the elongator complex is required for 2-thiolation. Also acts as a ubiquitin-like protein (UBL) that is covalently conjugated via an isopeptide bond to lysine residues of target proteins such as AHP1. The thiocarboxylated form serves as substrate for conjugation and oxidative stress specifically induces the formation of UBL-protein conjugates. The polypeptide is Ubiquitin-related modifier 1 (Candida albicans (strain SC5314 / ATCC MYA-2876) (Yeast)).